A 336-amino-acid polypeptide reads, in one-letter code: Coproporphyrin III ferrochelatase (336 aa).

2 residues coordinate Fe-coproporphyrin III: Ser-52 and Tyr-116. Fe(2+) contacts are provided by His-172 and Glu-255.

This sequence belongs to the ferrochelatase family.

It localises to the cytoplasm. The enzyme catalyses Fe-coproporphyrin III + 2 H(+) = coproporphyrin III + Fe(2+). Its pathway is porphyrin-containing compound metabolism; protoheme biosynthesis. In terms of biological role, involved in coproporphyrin-dependent heme b biosynthesis. Catalyzes the insertion of ferrous iron into coproporphyrin III to form Fe-coproporphyrin III. This chain is Coproporphyrin III ferrochelatase, found in Mycobacterium avium (strain 104).